A 392-amino-acid chain; its full sequence is MRYVTAGESHGPEEIAVIEGIPAGLHISQEDVNEQLARRQRGYGRGERQKIETDTVTFLTGVRHQTTLGSPITLNVHNDDHNNWSKIMAPNEPATAENTLRKVLRPRPGHADLVGGMKYRHREDLRNVLERSSARETTMRVAVGAVAKKLLSEIGVDVHGFVVNVGPAKSDLNELTKYKNLQELRVVTEGFDTRALNAEADEAIKEVIDKTKRDANTVGGQVQVIATGMPVGLGSYVSADTKLDAKIANAIVGINAFKGVQFGGGFDNAEKYGDQVMDEIFWDEERGFYRGSDNLGGFEGGMTTGEAIVVRGVVKPIPTLYRPMQSVDIDTHEDHRASIERSDTTAVTAAAVIAEAMVAIELAKAVLDKFDADNIERMKEQVAVYREEIRKF.

NADP(+)-binding residues include R39 and R45. FMN is bound by residues R131–S133, N255–A256, G300, K315–T319, and R341.

The protein belongs to the chorismate synthase family. In terms of assembly, homotetramer. FMNH2 serves as cofactor.

The enzyme catalyses 5-O-(1-carboxyvinyl)-3-phosphoshikimate = chorismate + phosphate. Its pathway is metabolic intermediate biosynthesis; chorismate biosynthesis; chorismate from D-erythrose 4-phosphate and phosphoenolpyruvate: step 7/7. In terms of biological role, catalyzes the anti-1,4-elimination of the C-3 phosphate and the C-6 proR hydrogen from 5-enolpyruvylshikimate-3-phosphate (EPSP) to yield chorismate, which is the branch point compound that serves as the starting substrate for the three terminal pathways of aromatic amino acid biosynthesis. This reaction introduces a second double bond into the aromatic ring system. The sequence is that of Chorismate synthase from Leuconostoc mesenteroides subsp. mesenteroides (strain ATCC 8293 / DSM 20343 / BCRC 11652 / CCM 1803 / JCM 6124 / NCDO 523 / NBRC 100496 / NCIMB 8023 / NCTC 12954 / NRRL B-1118 / 37Y).